The primary structure comprises 172 residues: Austinoid biosynthesis clusters protein J (172 aa).

This sequence belongs to the trt14 isomerase family. In terms of assembly, homodimer.

It participates in secondary metabolite biosynthesis; terpenoid biosynthesis. Functionally, part of the gene cluster B that mediates the biosynthesis of the fungal meroterpenoid acetoxydehydroaustin. The first step of the pathway is the synthesis of 3,5-dimethylorsellinic acid by the polyketide synthase ausA. 3,5-dimethylorsellinic acid is then prenylated by the polyprenyl transferase ausN. Further epoxidation by the FAD-dependent monooxygenase ausM and cyclization by the probable terpene cyclase ausL lead to the formation of protoaustinoid A. Protoaustinoid A is then oxidized to spiro-lactone preaustinoid A3 by the combined action of the FAD-binding monooxygenases ausB and ausC, and the dioxygenase ausE. Acid-catalyzed keto-rearrangement and ring contraction of the tetraketide portion of preaustinoid A3 by ausJ lead to the formation of preaustinoid A4. The aldo-keto reductase ausK, with the help of ausH, is involved in the next step by transforming preaustinoid A4 into isoaustinone which is in turn hydroxylated by the P450 monooxygenase ausI to form austinolide. The cytochrome P450 monooxygenase ausG then modifies austinolide to austinol. Austinol is further acetylated to austin by the O-acetyltransferase ausP, which spontaneously changes to dehydroaustin. The cytochrome P450 monooxygenase then converts dehydroaustin is into 7-dehydrodehydroaustin. The hydroxylation catalyzed by ausR permits the second O-acetyltransferase ausQ to add an additional acetyl group to the molecule, leading to the formation of acetoxydehydroaustin. Due to genetic rearrangements of the clusters and the subsequent loss of some enzymes, the end product of the Penicillium brasilianum austinoid biosynthesis clusters is acetoxydehydroaustin. In Penicillium brasilianum, this protein is Austinoid biosynthesis clusters protein J.